A 340-amino-acid polypeptide reads, in one-letter code: Cobalt-precorrin-5B C(1)-methyltransferase (340 aa).

It belongs to the CbiD family.

The catalysed reaction is Co-precorrin-5B + S-adenosyl-L-methionine = Co-precorrin-6A + S-adenosyl-L-homocysteine. The protein operates within cofactor biosynthesis; adenosylcobalamin biosynthesis; cob(II)yrinate a,c-diamide from sirohydrochlorin (anaerobic route): step 6/10. Its function is as follows. Catalyzes the methylation of C-1 in cobalt-precorrin-5B to form cobalt-precorrin-6A. The protein is Cobalt-precorrin-5B C(1)-methyltransferase of Pyrobaculum aerophilum (strain ATCC 51768 / DSM 7523 / JCM 9630 / CIP 104966 / NBRC 100827 / IM2).